Consider the following 174-residue polypeptide: UPF0316 protein LMHCC_0787 (174 aa).

3 consecutive transmembrane segments (helical) span residues 4–24 (GIFI…IYTV), 36–56 (LAAL…SLVL), and 62–82 (IANV…GMKI).

Belongs to the UPF0316 family.

It localises to the cell membrane. This is UPF0316 protein LMHCC_0787 from Listeria monocytogenes serotype 4a (strain HCC23).